The primary structure comprises 662 residues: Putative cysteine-rich receptor-like protein kinase 16 (662 aa).

Positions 1–26 (MIFIMKLKNLLPIFCFFLVSFSISSA) are cleaved as a signal peptide. Gnk2-homologous domains are found at residues 27 to 131 (QKCG…NRSF) and 137 to 244 (MTPF…LYQF). Over 27-277 (QKCGKTGLFK…DDGGKISTRN (251 aa)) the chain is Extracellular. 7 N-linked (GlcNAc...) asparagine glycosylation sites follow: Asn-55, Asn-64, Asn-106, Asn-128, Asn-145, Asn-152, and Asn-206. Residues 278 to 298 (ILGITVALAFFITVLLVLGYA) traverse the membrane as a helical segment. The Cytoplasmic segment spans residues 299–662 (LSRRRKAYQE…DASITSVDLR (364 aa)). In terms of domain architecture, Protein kinase spans 335–612 (FQKSNKLGHG…VFQMLTNTFL (278 aa)). ATP is bound by residues 341–349 (LGHGGFGEV) and Lys-363. Asp-460 acts as the Proton acceptor in catalysis.

This sequence belongs to the protein kinase superfamily. Ser/Thr protein kinase family. CRK subfamily.

The protein resides in the membrane. The enzyme catalyses L-seryl-[protein] + ATP = O-phospho-L-seryl-[protein] + ADP + H(+). It catalyses the reaction L-threonyl-[protein] + ATP = O-phospho-L-threonyl-[protein] + ADP + H(+). The sequence is that of Putative cysteine-rich receptor-like protein kinase 16 (CRK16) from Arabidopsis thaliana (Mouse-ear cress).